We begin with the raw amino-acid sequence, 304 residues long: E3 ubiquitin-protein ligase CHIP (304 aa).

Residues 1–10 (MKGKEEKEGG) are compositionally biased toward basic and acidic residues. Positions 1–30 (MKGKEEKEGGARLGTGGGGSPDKSPSAQEL) are disordered. Lys2 participates in a covalent cross-link: Glycyl lysine isopeptide (Lys-Gly) (interchain with G-Cter in ubiquitin). Residues 11–20 (ARLGTGGGGS) are compositionally biased toward gly residues. A Phosphoserine modification is found at Ser20. Lys23 is covalently cross-linked (Glycyl lysine isopeptide (Lys-Gly) (interchain with G-Cter in ubiquitin)). A phosphoserine mark is found at Ser24 and Ser26. 3 TPR repeats span residues 27 to 60 (AQELKEQGNRLFVGRKYPEAAACYGRAITRNPLV), 61 to 94 (AVYYTNRALCYLKMQQPEQALADCRRALELDGQS), and 96 to 128 (KAHFFLGQCQLEMESYDEAIANLQRAYSLAKEQ). The required for interaction with MAPK7 stretch occupies residues 102-201 (GQCQLEMESY…GHIRAQQACI (100 aa)). The tract at residues 143 to 197 (AKKKRWNSIEERRIHQESELHSYLTRLIAAERERELEECQRNHEGDEDDGHIRAQ) is required for interaction with and ubiquitination of MYOCD. The segment at 144-198 (KKKRWNSIEERRIHQESELHSYLTRLIAAERERELEECQRNHEGDEDDGHIRAQQ) is required for interaction with FOXO1. The required for ubiquitination of FOXO1 stretch occupies residues 144 to 304 (KKKRWNSIEE…ISENGWVEDY (161 aa)). Ser150 bears the Phosphoserine mark. Residues Lys222 and Lys256 each participate in a glycyl lysine isopeptide (Lys-Gly) (interchain with G-Cter in ubiquitin) cross-link. Positions 227–301 (DIPDYLCGKI…DAFISENGWV (75 aa)) constitute a U-box domain. Position 274 is a phosphoserine (Ser274).

Homodimer. Interacts with BAG2, and with the E2 ubiquitin conjugating enzymes UBE2D1, UBE2D2 and UBE2D3. Detected in a ternary complex containing STUB1, HSPA1A and HSPBP1. Part of a complex composed of STUB1/CHIP, VCP/p97, CHRNA3, and UBXN2A that modulates the ubiquitination and endoplasmic reticulum-associated degradation (ERAD) of CHRNA3. Within the complex UBXN2A acts as a scaffold protein required for the interaction of CHRNA3 with VCP/p97, this interaction also inhibits CHRNA3 ubiquitination by STUB1/CHIP and subsequently ERAD. Interacts with MKKS. Interacts with DNAAF4. Interacts (via the U-box domain) with the UBE2V2-UBE2N heterodimer; the complex has a specific 'Lys-63'-linked polyubiquitination activity. Interacts (when monoubiquitinated) with ATXN3. Interacts with UBE2W. Interacts with DNAJB6. Interacts with FLCN and HSP90AA1. Interacts with HSP90. Interacts with UBE2N and UBE2V1. Interacts (via TPR repeats) with HSPA8 (via C-terminus). Interacts (via TPR repeats) with HSPA1A (via C-terminus). Interacts with the non-acetylated form of HSPA1A and HSPA1B. Interacts with SMAD3 and HSP90AB1. Interacts with UBE4B. Interacts with PRMT5. Interacts with MYOCD (via C-terminus). Interacts with FOXO1 (when phosphorylated on 'Ser-250'). Interacts with MAPK7/ERK5; the interaction is enhanced in the presence of IGF1 or MAP2K5 and promotes STUB1/CHIP E3 ligase activity. Interacts with and ubiquitinates ESR1; the interaction is promoted in the absence of estradiol (17-beta-estradiol/E2). Interacts with ESR2. Interacts with and ubiquitinates NFATC3; HSPA1A/HSP70 is required as a co-chaperone. In macrophages, interacts with PAQR3; the interaction promotes PPARG poylubiquitination and STUB1-mediated degradation. Component of the chaperone-assisted selective autophagy (CASA) complex consisting of BAG3, HSPA8/HSC70, HSPB8 and STUB1/CHIP. Post-translationally, auto-ubiquitinated; mediated by UBE2D1 and UBE2D2 and enhanced in the presence of MAP2K5. Monoubiquitinated at Lys-2 following cell stress by UBE2W, promoting the interaction with ATXN3. As to expression, expressed in the adventitia layer of the carotid artery (at protein level). Expressed in the CA1 region of the hippocampus (at protein level). Expressed in the uterus (at protein level).

It is found in the cytoplasm. The protein localises to the nucleus. Its subcellular location is the mitochondrion. The catalysed reaction is S-ubiquitinyl-[E2 ubiquitin-conjugating enzyme]-L-cysteine + [acceptor protein]-L-lysine = [E2 ubiquitin-conjugating enzyme]-L-cysteine + N(6)-ubiquitinyl-[acceptor protein]-L-lysine.. It functions in the pathway protein modification; protein ubiquitination. In terms of biological role, E3 ubiquitin-protein ligase which targets misfolded chaperone substrates towards proteasomal degradation. Plays a role in the maintenance of mitochondrial morphology and promotes mitophagic removal of dysfunctional mitochondria; thereby acts as a protector against apoptosis in response to cellular stress. Negatively regulates vascular smooth muscle contraction, via degradation of the transcriptional activator MYOCD and subsequent loss of transcription of genes involved in vascular smooth muscle contraction. Promotes survival and proliferation of cardiac smooth muscle cells via ubiquitination and degradation of FOXO1, resulting in subsequent repression of FOXO1-mediated transcription of pro-apoptotic genes. Ubiquitinates ICER-type isoforms of CREM and targets them for proteasomal degradation, thereby acts as a positive effector of MAPK/ERK-mediated inhibition of apoptosis in cardiomyocytes. Inhibits lipopolysaccharide-induced apoptosis and hypertrophy in cardiomyocytes, via ubiquitination and subsequent proteasomal degradation of NFATC3. Collaborates with ATXN3 in the degradation of misfolded chaperone substrates: ATXN3 restricting the length of ubiquitin chain attached to STUB1/CHIP substrates and preventing further chain extension. Ubiquitinates NOS1 in concert with Hsp70 and Hsp40. Modulates the activity of several chaperone complexes, including Hsp70, Hsc70 and Hsp90. Ubiquitinates CHRNA3 targeting it for endoplasmic reticulum-associated degradation in cortical neurons, as part of the STUB1-VCP-UBXN2A complex. Ubiquitinates and promotes ESR1 proteasomal degradation in response to age-related circulating estradiol (17-beta-estradiol/E2) decline, thereby promotes neuronal apoptosis in response to ischemic reperfusion injury. Mediates transfer of non-canonical short ubiquitin chains to HSPA8 that have no effect on HSPA8 degradation. Mediates polyubiquitination of DNA polymerase beta (POLB) at 'Lys-41', 'Lys-61' and 'Lys-81', thereby playing a role in base-excision repair: catalyzes polyubiquitination by amplifying the HUWE1/ARF-BP1-dependent monoubiquitination and leading to POLB-degradation by the proteasome. Mediates polyubiquitination of CYP3A4. Ubiquitinates EPHA2 and may regulate the receptor stability and activity through proteasomal degradation. Acts as a co-chaperone for HSPA1A and HSPA1B chaperone proteins and promotes ubiquitin-mediated protein degradation. Negatively regulates the suppressive function of regulatory T-cells (Treg) during inflammation by mediating the ubiquitination and degradation of FOXP3 in a HSPA1A/B-dependent manner. Catalyzes monoubiquitination of SIRT6, preventing its degradation by the proteasome. Likely mediates polyubiquitination and down-regulates plasma membrane expression of PD-L1/CD274, an immune inhibitory ligand critical for immune tolerance to self and antitumor immunity. Negatively regulates TGF-beta signaling by modulating the basal level of SMAD3 via ubiquitin-mediated degradation. Plays a role in the degradation of TP53. Mediates ubiquitination of RIPK3 leading to its subsequent proteasome-dependent degradation. May regulate myosin assembly in striated muscles together with UBE4B and VCP/p97 by targeting myosin chaperone UNC45B for proteasomal degradation. Ubiquitinates PPARG in macrophages playing a role in M2 macrophages polarization and angiogenesis. In Rattus norvegicus (Rat), this protein is E3 ubiquitin-protein ligase CHIP.